The following is a 236-amino-acid chain: Phosphoribosylaminoimidazole-succinocarboxamide synthase (236 aa).

This sequence belongs to the SAICAR synthetase family.

It catalyses the reaction 5-amino-1-(5-phospho-D-ribosyl)imidazole-4-carboxylate + L-aspartate + ATP = (2S)-2-[5-amino-1-(5-phospho-beta-D-ribosyl)imidazole-4-carboxamido]succinate + ADP + phosphate + 2 H(+). It functions in the pathway purine metabolism; IMP biosynthesis via de novo pathway; 5-amino-1-(5-phospho-D-ribosyl)imidazole-4-carboxamide from 5-amino-1-(5-phospho-D-ribosyl)imidazole-4-carboxylate: step 1/2. The chain is Phosphoribosylaminoimidazole-succinocarboxamide synthase from Pelodictyon phaeoclathratiforme (strain DSM 5477 / BU-1).